A 203-amino-acid polypeptide reads, in one-letter code: LexA repressor (203 aa).

A DNA-binding region (H-T-H motif) is located at residues 32-52 (RAEICTAFGFRSPNAAETHLR). Residues Ser-121 and Lys-158 each act as for autocatalytic cleavage activity in the active site.

Belongs to the peptidase S24 family. In terms of assembly, homodimer.

The enzyme catalyses Hydrolysis of Ala-|-Gly bond in repressor LexA.. Represses a number of genes involved in the response to DNA damage (SOS response), including recA and lexA. In the presence of single-stranded DNA, RecA interacts with LexA causing an autocatalytic cleavage which disrupts the DNA-binding part of LexA, leading to derepression of the SOS regulon and eventually DNA repair. This chain is LexA repressor, found in Aromatoleum aromaticum (strain DSM 19018 / LMG 30748 / EbN1) (Azoarcus sp. (strain EbN1)).